The following is a 279-amino-acid chain: MGFIKSTLLATVTVFVGLCGINRFFTLPKCIRYHFRYFACHTFLAISSAYGVIASVVARLCGYPVMGQYLTAKAYYGLASTILDFRFKIENEEILRKHKSAVLVVNHQSELDILAIGRTFGPNYSVIAKKSLRYVPILGWFMILSDVVFIDRSRRSDAIQLFAKAARRMRKENISIWVFAEGTRSYSLKPCLLPLKKGAFHLAVQAQVPIIPIAIQTYGHLFHPPTKVFNKGEALIKVLDPIPTEGKTAEDVNDLLHETETAMNNALVEIDDYGKVKKQ.

The next 3 helical transmembrane spans lie at 1 to 21 (MGFI…LCGI), 38 to 58 (FACH…SVVA), and 131 to 151 (SLRY…VFID).

The protein belongs to the 1-acyl-sn-glycerol-3-phosphate acyltransferase family.

It localises to the endoplasmic reticulum membrane. This is an uncharacterized protein from Schizosaccharomyces pombe (strain 972 / ATCC 24843) (Fission yeast).